We begin with the raw amino-acid sequence, 89 residues long: Large ribosomal subunit protein bL27 (89 aa).

A disordered region spans residues 1–21 (MAHKKAGGSSRNGRDTEGRRL).

This sequence belongs to the bacterial ribosomal protein bL27 family.

The sequence is that of Large ribosomal subunit protein bL27 from Granulibacter bethesdensis (strain ATCC BAA-1260 / CGDNIH1).